The primary structure comprises 208 residues: Protein-L-isoaspartate O-methyltransferase (208 aa).

Residue Ser-59 is part of the active site.

The protein belongs to the methyltransferase superfamily. L-isoaspartyl/D-aspartyl protein methyltransferase family.

The protein resides in the cytoplasm. It carries out the reaction [protein]-L-isoaspartate + S-adenosyl-L-methionine = [protein]-L-isoaspartate alpha-methyl ester + S-adenosyl-L-homocysteine. Catalyzes the methyl esterification of L-isoaspartyl residues in peptides and proteins that result from spontaneous decomposition of normal L-aspartyl and L-asparaginyl residues. It plays a role in the repair and/or degradation of damaged proteins. This is Protein-L-isoaspartate O-methyltransferase from Erwinia tasmaniensis (strain DSM 17950 / CFBP 7177 / CIP 109463 / NCPPB 4357 / Et1/99).